A 387-amino-acid chain; its full sequence is Glutamyl-tRNA reductase 1 (387 aa).

Substrate contacts are provided by residues 45-48 (TCNR), serine 96, 101-103 (ETD), and glutamine 107. Residue cysteine 46 is the Nucleophile of the active site. NADP(+) is bound at residue 175–180 (GAGSVG).

This sequence belongs to the glutamyl-tRNA reductase family. As to quaternary structure, homodimer.

It carries out the reaction (S)-4-amino-5-oxopentanoate + tRNA(Glu) + NADP(+) = L-glutamyl-tRNA(Glu) + NADPH + H(+). It participates in porphyrin-containing compound metabolism; protoporphyrin-IX biosynthesis; 5-aminolevulinate from L-glutamyl-tRNA(Glu): step 1/2. Functionally, catalyzes the NADPH-dependent reduction of glutamyl-tRNA(Glu) to glutamate 1-semialdehyde (GSA). This is Glutamyl-tRNA reductase 1 from Pyrobaculum arsenaticum (strain DSM 13514 / JCM 11321 / PZ6).